The sequence spans 340 residues: Nuclear hormone receptor family member nhr-268 (340 aa).

The segment at residues 1-75 (MNCLVCSARA…IGMKAASKND (75 aa)) is a DNA-binding region (nuclear receptor). NR C4-type zinc fingers lie at residues 3–23 (CLVC…CFAC) and 39–58 (CKYF…CRAC). Positions 98-337 (KNDKNYSNFI…KRLMQDIFSH (240 aa)) constitute an NR LBD domain.

The protein belongs to the nuclear hormone receptor family.

The protein resides in the nucleus. Its function is as follows. Orphan nuclear receptor. The chain is Nuclear hormone receptor family member nhr-268 (nhr-268) from Caenorhabditis elegans.